Consider the following 167-residue polypeptide: Lipoprotein signal peptidase (167 aa).

Transmembrane regions (helical) follow at residues 10–30 (LIWL…KAWV), 68–88 (WQMW…TFWL), and 98–118 (SALP…DRFL). Residues Asp-124 and Asp-142 contribute to the active site. A helical membrane pass occupies residues 138–158 (FNLADSAIVAGAIGIGLLSLF).

This sequence belongs to the peptidase A8 family.

The protein localises to the cell inner membrane. The enzyme catalyses Release of signal peptides from bacterial membrane prolipoproteins. Hydrolyzes -Xaa-Yaa-Zaa-|-(S,diacylglyceryl)Cys-, in which Xaa is hydrophobic (preferably Leu), and Yaa (Ala or Ser) and Zaa (Gly or Ala) have small, neutral side chains.. It functions in the pathway protein modification; lipoprotein biosynthesis (signal peptide cleavage). Its function is as follows. This protein specifically catalyzes the removal of signal peptides from prolipoproteins. The chain is Lipoprotein signal peptidase from Xylella fastidiosa (strain 9a5c).